Reading from the N-terminus, the 420-residue chain is Type II methyltransferase M.NmeDI (420 aa).

Residues 1-23 (MMSLKIQPAVPKKSDKPSATNRD) are disordered. The SAM-dependent MTase C5-type domain maps to 56–411 (TLIFSFFSGA…MTLKSYLENH (356 aa)). The active site involves Cys-148.

Belongs to the class I-like SAM-binding methyltransferase superfamily. C5-methyltransferase family.

The enzyme catalyses a 2'-deoxycytidine in DNA + S-adenosyl-L-methionine = a 5-methyl-2'-deoxycytidine in DNA + S-adenosyl-L-homocysteine + H(+). Its function is as follows. A methylase that recognizes the double-stranded sequence 5'-RCCGGB-3', methylates C-2 on both strands, and protects the DNA from cleavage by the NmeDI endonuclease. The polypeptide is Type II methyltransferase M.NmeDI (nmeDIMP) (Neisseria meningitidis serogroup C).